A 476-amino-acid polypeptide reads, in one-letter code: RuvB-like 1 (476 aa).

Residues 1–23 (MDMEVDEAISGTSSSRLAPIEEV) are disordered. 89-96 (GPPATGKT) contributes to the ATP binding site.

Belongs to the RuvB family. Forms homohexameric rings. May form a dodecamer with ruvb-2 made of two stacked hexameric rings. In terms of tissue distribution, expressed in gonadal cells.

The protein localises to the cytoplasm. It is found in the nucleus. It catalyses the reaction ATP + H2O = ADP + phosphate + H(+). Possesses single-stranded DNA-stimulated ATPase and ATP dependent DNA helicase (3' to 5') activity suggesting a role in nuclear processes such as recombination and transcription. May participate in several chromatin remodeling complexes that mediate the ATP-dependent exchange of histones and remodel chromatin by shifting nucleosomes. Involvement in these complexes is likely required for transcriptional activation of selected genes and DNA repair in response to DNA damage. Involved in the Ce-Tor signaling pathway whereby it is required for the accumulation and localization of box C/D snoRNP to nucleoli to regulate ribosomal maturation and thus protein synthesis. Antagonizes the transcriptional activity of transcription factor pha-4, to control postembryonic development and adult longevity. Has a role in pharyngeal development. Has a role in gonadal development. The protein is RuvB-like 1 of Caenorhabditis elegans.